Reading from the N-terminus, the 88-residue chain is UPF0367 protein Synpcc7942_1638 (88 aa).

This sequence belongs to the UPF0367 family.

This Synechococcus elongatus (strain ATCC 33912 / PCC 7942 / FACHB-805) (Anacystis nidulans R2) protein is UPF0367 protein Synpcc7942_1638.